Reading from the N-terminus, the 348-residue chain is 3-keto-steroid reductase (348 aa).

Residues Leu18, Val37, Thr41, Arg47, and Arg163 each coordinate NADP(+). Residues Ser180 and Tyr203 each act as proton donor in the active site. Residues Tyr203, Lys207, and Ser238 each contribute to the NADP(+) site. Lys207 (lowers pKa of active site Tyr) is an active-site residue.

Belongs to the short-chain dehydrogenases/reductases (SDR) family. ERG27 subfamily.

It catalyses the reaction a 3beta-hydroxysteroid + NADP(+) = a 3-oxosteroid + NADPH + H(+). The protein operates within steroid biosynthesis; zymosterol biosynthesis; zymosterol from lanosterol: step 5/6. Its function is as follows. Responsible for the reduction of the keto group on the C-3 of sterols. This chain is 3-keto-steroid reductase (ERG27), found in Eremothecium gossypii (strain ATCC 10895 / CBS 109.51 / FGSC 9923 / NRRL Y-1056) (Yeast).